Consider the following 152-residue polypeptide: D-aminoacyl-tRNA deacylase (152 aa).

The Gly-cisPro motif, important for rejection of L-amino acids signature appears at 137–138; that stretch reads GP.

Belongs to the DTD family. As to quaternary structure, homodimer.

The protein resides in the cytoplasm. The enzyme catalyses glycyl-tRNA(Ala) + H2O = tRNA(Ala) + glycine + H(+). It carries out the reaction a D-aminoacyl-tRNA + H2O = a tRNA + a D-alpha-amino acid + H(+). An aminoacyl-tRNA editing enzyme that deacylates mischarged D-aminoacyl-tRNAs. Also deacylates mischarged glycyl-tRNA(Ala), protecting cells against glycine mischarging by AlaRS. Acts via tRNA-based rather than protein-based catalysis; rejects L-amino acids rather than detecting D-amino acids in the active site. By recycling D-aminoacyl-tRNA to D-amino acids and free tRNA molecules, this enzyme counteracts the toxicity associated with the formation of D-aminoacyl-tRNA entities in vivo and helps enforce protein L-homochirality. The chain is D-aminoacyl-tRNA deacylase from Thermus aquaticus.